A 109-amino-acid chain; its full sequence is Putative membrane protein insertion efficiency factor (109 aa).

Belongs to the UPF0161 family.

It localises to the cell inner membrane. Its function is as follows. Could be involved in insertion of integral membrane proteins into the membrane. In Rhodopseudomonas palustris (strain BisA53), this protein is Putative membrane protein insertion efficiency factor.